The sequence spans 303 residues: Sulfotransferase 6B1 (303 aa).

Residue 65–70 (KCGSNW) coordinates 3'-phosphoadenylyl sulfate. His118 serves as the catalytic Proton acceptor. 3'-phosphoadenylyl sulfate is bound by residues Arg140, Ser148, Tyr203, 237–242 (STFQAM), and 259–261 (RKG).

It belongs to the sulfotransferase 1 family.

The protein localises to the cytoplasm. Its subcellular location is the cytosol. It catalyses the reaction thyroxine + 3'-phosphoadenylyl sulfate = thyroxine sulfate + adenosine 3',5'-bisphosphate + H(+). Sulfotransferase that utilizes 3'-phospho-5'-adenylyl sulfate (PAPS) as sulfonate donor to catalyze the sulfate conjugation of thyroxine. Involved in the metabolism of thyroxine. The polypeptide is Sulfotransferase 6B1 (SULT6B1) (Gorilla gorilla gorilla (Western lowland gorilla)).